The primary structure comprises 343 residues: GTPase Obg (343 aa).

The 159-residue stretch at 1–159 (MKFVDSASIF…LQLDMELKLM (159 aa)) folds into the Obg domain. The interval 121-144 (GHGGRGNQHFATSTNQAPRRSEPG) is disordered. Polar residues predominate over residues 129–138 (HFATSTNQAP). An OBG-type G domain is found at 160-323 (ADVGLVGFPN…LKDELWREVS (164 aa)). GTP-binding positions include 166 to 173 (GFPNAGKS), 191 to 195 (FTTLV), 213 to 216 (DIPG), 280 to 283 (TKMD), and 304 to 306 (SSV). Mg(2+)-binding residues include Ser-173 and Thr-193. The segment at 322-343 (VSMRDRPEESSDPEGEGDGGTP) is disordered. Residues 331–343 (SSDPEGEGDGGTP) show a composition bias toward acidic residues.

The protein belongs to the TRAFAC class OBG-HflX-like GTPase superfamily. OBG GTPase family. Monomer. Mg(2+) serves as cofactor.

The protein resides in the cytoplasm. In terms of biological role, an essential GTPase which binds GTP, GDP and possibly (p)ppGpp with moderate affinity, with high nucleotide exchange rates and a fairly low GTP hydrolysis rate. Plays a role in control of the cell cycle, stress response, ribosome biogenesis and in those bacteria that undergo differentiation, in morphogenesis control. This chain is GTPase Obg, found in Chlorobium luteolum (strain DSM 273 / BCRC 81028 / 2530) (Pelodictyon luteolum).